We begin with the raw amino-acid sequence, 99 residues long: Evasin P1162 (99 aa).

An N-terminal signal peptide occupies residues 1–28 (MEVKTFAFLQIAVCIAIGIELICAGTNA). Disulfide bonds link cysteine 40/cysteine 59, cysteine 44/cysteine 61, and cysteine 55/cysteine 72. 4 N-linked (GlcNAc...) asparagine glycosylation sites follow: asparagine 43, asparagine 49, asparagine 58, and asparagine 85.

It is found in the secreted. Salivary chemokine-binding protein which binds to host chemokines CXCL1, CXCL2, CXCL3, CXCL5 and CXCL8. In Ixodes ricinus (Common tick), this protein is Evasin P1162.